A 281-amino-acid chain; its full sequence is Sulfur carrier protein FdhD (281 aa).

The active-site Cysteine persulfide intermediate is the C117.

It belongs to the FdhD family.

It is found in the cytoplasm. In terms of biological role, required for formate dehydrogenase (FDH) activity. Acts as a sulfur carrier protein that transfers sulfur from IscS to the molybdenum cofactor prior to its insertion into FDH. The chain is Sulfur carrier protein FdhD from Xanthomonas oryzae pv. oryzae (strain MAFF 311018).